The primary structure comprises 113 residues: Outer membrane protein assembly factor BamE (113 aa).

An N-terminal signal peptide occupies residues 1-19; sequence MRCKTLTAAAAVLLMLTAG. Cys20 carries N-palmitoyl cysteine lipidation. Cys20 carries S-diacylglycerol cysteine lipidation.

Belongs to the BamE family. Part of the Bam complex, which is composed of the outer membrane protein BamA, and four lipoproteins BamB, BamC, BamD and BamE.

It localises to the cell outer membrane. Part of the outer membrane protein assembly complex, which is involved in assembly and insertion of beta-barrel proteins into the outer membrane. The protein is Outer membrane protein assembly factor BamE of Escherichia coli O6:H1 (strain CFT073 / ATCC 700928 / UPEC).